A 492-amino-acid chain; its full sequence is Probable endopolygalacturonase D (492 aa).

An N-terminal signal peptide occupies residues 1-16 (MKRSALILSFLPLVFG). A disulfide bond links Cys151 and Cys166. 4 PbH1 repeats span residues 216 to 238 (GTSVTITGVEGHVIDGNGAAYWD), 258 to 280 (MYNSRIENLYIQNWPVHCFEIES), 281 to 319 (TEHLTVSGLTLNNSAGDAANSKSDGDPAAHNSDGFDIKE), and 320 to 341 (SSYFTLENTWVHNQDDCVAVTS). Asn292 is a glycosylation site (N-linked (GlcNAc...) asparagine). The active-site Proton donor is the Asp334. A disulfide bond links Cys336 and Cys352. Residue His356 is part of the active site. PbH1 repeat units lie at residues 371-392 (VNGVTFSNSQVISSQNGCRIKT), 400-422 (VYNIRYENITLSDISDYGIDVQQ), and 434-478 (TNGV…SITG). Residues Asn407 and Asn441 are each glycosylated (N-linked (GlcNAc...) asparagine). 2 disulfides stabilise this stretch: Cys461–Cys466 and Cys484–Cys491.

Belongs to the glycosyl hydrolase 28 family.

It is found in the secreted. The catalysed reaction is (1,4-alpha-D-galacturonosyl)n+m + H2O = (1,4-alpha-D-galacturonosyl)n + (1,4-alpha-D-galacturonosyl)m.. Its function is as follows. Involved in maceration and soft-rotting of plant tissue. Hydrolyzes the 1,4-alpha glycosidic bonds of de-esterified pectate in the smooth region of the plant cell wall. The protein is Probable endopolygalacturonase D (pgaD) of Aspergillus flavus (strain ATCC 200026 / FGSC A1120 / IAM 13836 / NRRL 3357 / JCM 12722 / SRRC 167).